Here is a 314-residue protein sequence, read N- to C-terminus: Serine protease 46 (314 aa).

Positions 44-281 (VVNGKAVEVG…FTQWIKRQIG (238 aa)) constitute a Peptidase S1 domain. Cysteine 69 and cysteine 85 are disulfide-bonded. Catalysis depends on charge relay system residues histidine 84 and aspartate 130. 3 disulfide bridges follow: cysteine 164/cysteine 239, cysteine 197/cysteine 219, and cysteine 229/cysteine 257. Serine 233 functions as the Charge relay system in the catalytic mechanism. The helical transmembrane segment at 293-313 (FLSPFILTGYILLVSLGSLWL) threads the bilayer.

The protein belongs to the peptidase S1 family.

The protein localises to the membrane. The sequence is that of Serine protease 46 (Prss46) from Mus musculus (Mouse).